A 646-amino-acid chain; its full sequence is MEKLSYTFSQQYEEKIRPCIDTIDNLRSLGVEKDLALPAIAVIGDQSSGKSSVLEALSGVPLPRGSGIVTRCPLELKMIRTKDQDRWHGRISYKTCEEDFDDPAEVEKKIRQAQDEMAGAGVGISEELISLQITSADVPDLTLIDLPGIARVAVKGQPENIGDQIKRLIRKFVTRQETINLVVVPCNVDIATTEALQMAQAEDPDGERTLGILTKPDLVDKGTEGTVVDIVHNEVIHLTKGYMIVRCRGQKEIMDQVTLNEATETESAFFKDHPHFSKLYEEGFATIPKLAEKLTIELVHHIQKSLPRLEEQIETKLAETQKELEAYGNGPPSEPAARLSFFIDKVTAFNQDMLNLTTGEDVKCTTDLLLFPELRQEFAKWSHILDRSGDSFNKKIEKEVDNYEVKYRGRELPGFINYKTFEGLVRDQIKLLEEPALKTLKTVSDVVRKKFIQLAQCSFIGFPNLLKIAKTKIEGIKLNKESLAESMLKTQFKMELIVYSQDGTYSQSLKHAKDKLEEMEKERPQPKIKLPLLSSFDLGTDNHATLREMRLHLKSYYTIASKRLADQIPMVIRYMLLQEAALELQRNMLQLLQDKDGVDNLLKEDCDIGQKRENLLSRQTRLIEGTQPLGHLLEVTFIDYCNILMQ.

The Dynamin-type G domain maps to 34–307 (DLALPAIAVI…LVHHIQKSLP (274 aa)). The G1 motif stretch occupies residues 44–51 (GDQSSGKS). 44 to 51 (GDQSSGKS) serves as a coordination point for GTP. Residues 69–71 (VTR) are G2 motif. Positions 145–148 (DLPG) are G3 motif. GTP-binding positions include 145-149 (DLPGI) and 214-217 (TKPD). The segment at 214 to 217 (TKPD) is G4 motif. Residues 246-249 (RCRG) form a G5 motif region. Residues 546 to 637 (LREMRLHLKS…PLGHLLEVTF (92 aa)) enclose the GED domain.

The protein belongs to the TRAFAC class dynamin-like GTPase superfamily. Dynamin/Fzo/YdjA family.

The protein resides in the cytoplasm. The chain is Interferon-induced GTP-binding protein MxA (mxa) from Danio rerio (Zebrafish).